Reading from the N-terminus, the 428-residue chain is Aerobic C4-dicarboxylate transport protein (428 aa).

Helical transmembrane passes span 5-27 (LFKSLYFQVLTAIAIGILLGHYY), 47-64 (MIIAPVIFCTVVTGIAGM), 77-99 (ALLYFEIVSTIALIIGLIIVNVV), 141-163 (VIGAFASGNILQVLLFAVLFGFA), 184-206 (VIFGIINMIMRLAPIGAFGAMAF), 216-238 (LVQLGQLIICFYITCILFVVVVL), 289-311 (VVGLVIPTGYSFNLDGTSIYLTM), 326-348 (IFHQITLLVVLLLSSKGAAGVTG), and 353-375 (VLAATISAVGHLPVAGLALILGI).

It belongs to the dicarboxylate/amino acid:cation symporter (DAACS) (TC 2.A.23) family.

Its subcellular location is the cell inner membrane. In terms of biological role, responsible for the transport of dicarboxylates such as succinate, fumarate, and malate from the periplasm across the inner membrane. In Salmonella typhimurium (strain LT2 / SGSC1412 / ATCC 700720), this protein is Aerobic C4-dicarboxylate transport protein (dctA).